A 266-amino-acid chain; its full sequence is 4-hydroxy-tetrahydrodipicolinate reductase (266 aa).

10-15 (GPRGRM) serves as a coordination point for NAD(+). Lysine 38 contributes to the NADP(+) binding site. Residues 99-101 (GTT) and 125-128 (APNF) contribute to the NAD(+) site. Histidine 155 serves as the catalytic Proton donor/acceptor. Histidine 156 serves as a coordination point for (S)-2,3,4,5-tetrahydrodipicolinate. Lysine 159 acts as the Proton donor in catalysis. Residue 165-166 (GT) coordinates (S)-2,3,4,5-tetrahydrodipicolinate.

Belongs to the DapB family.

The protein localises to the cytoplasm. It carries out the reaction (S)-2,3,4,5-tetrahydrodipicolinate + NAD(+) + H2O = (2S,4S)-4-hydroxy-2,3,4,5-tetrahydrodipicolinate + NADH + H(+). It catalyses the reaction (S)-2,3,4,5-tetrahydrodipicolinate + NADP(+) + H2O = (2S,4S)-4-hydroxy-2,3,4,5-tetrahydrodipicolinate + NADPH + H(+). It functions in the pathway amino-acid biosynthesis; L-lysine biosynthesis via DAP pathway; (S)-tetrahydrodipicolinate from L-aspartate: step 4/4. Its function is as follows. Catalyzes the conversion of 4-hydroxy-tetrahydrodipicolinate (HTPA) to tetrahydrodipicolinate. The polypeptide is 4-hydroxy-tetrahydrodipicolinate reductase (Bacillus cereus (strain B4264)).